The following is a 444-amino-acid chain: Trigger factor (444 aa).

The region spanning 163-248 (GDFLTVDFVG…AKALKKAVAP (86 aa)) is the PPIase FKBP-type domain.

It belongs to the FKBP-type PPIase family. Tig subfamily.

It localises to the cytoplasm. The enzyme catalyses [protein]-peptidylproline (omega=180) = [protein]-peptidylproline (omega=0). Functionally, involved in protein export. Acts as a chaperone by maintaining the newly synthesized protein in an open conformation. Functions as a peptidyl-prolyl cis-trans isomerase. In Granulibacter bethesdensis (strain ATCC BAA-1260 / CGDNIH1), this protein is Trigger factor.